The sequence spans 320 residues: o-succinylbenzoate synthase (320 aa).

Catalysis depends on Lys-133, which acts as the Proton donor. Residues Asp-161, Glu-190, and Asp-213 each contribute to the Mg(2+) site. Catalysis depends on Lys-235, which acts as the Proton acceptor.

It belongs to the mandelate racemase/muconate lactonizing enzyme family. MenC type 1 subfamily. It depends on a divalent metal cation as a cofactor.

It catalyses the reaction (1R,6R)-6-hydroxy-2-succinyl-cyclohexa-2,4-diene-1-carboxylate = 2-succinylbenzoate + H2O. Its pathway is quinol/quinone metabolism; 1,4-dihydroxy-2-naphthoate biosynthesis; 1,4-dihydroxy-2-naphthoate from chorismate: step 4/7. The protein operates within quinol/quinone metabolism; menaquinone biosynthesis. Its function is as follows. Converts 2-succinyl-6-hydroxy-2,4-cyclohexadiene-1-carboxylate (SHCHC) to 2-succinylbenzoate (OSB). This is o-succinylbenzoate synthase from Escherichia coli O9:H4 (strain HS).